The chain runs to 159 residues: Endoribonuclease YbeY (159 aa).

Zn(2+) contacts are provided by histidine 125, histidine 129, and histidine 135.

The protein belongs to the endoribonuclease YbeY family. Requires Zn(2+) as cofactor.

Its subcellular location is the cytoplasm. Its function is as follows. Single strand-specific metallo-endoribonuclease involved in late-stage 70S ribosome quality control and in maturation of the 3' terminus of the 16S rRNA. The sequence is that of Endoribonuclease YbeY from Thermoanaerobacter pseudethanolicus (strain ATCC 33223 / 39E) (Clostridium thermohydrosulfuricum).